Reading from the N-terminus, the 25-residue chain is Small ribosomal subunit protein eS32 (25 aa).

The tract at residues 1–25 (MRAKWRKKRVRRLKRKRRKTRARSK) is disordered.

Belongs to the eukaryotic ribosomal protein eS32 family. As to quaternary structure, component of the small ribosomal subunit.

The polypeptide is Small ribosomal subunit protein eS32 (RPL41) (Quercus suber (Cork oak)).